Reading from the N-terminus, the 137-residue chain is Large ribosomal subunit protein uL16 (137 aa).

Belongs to the universal ribosomal protein uL16 family. Part of the 50S ribosomal subunit.

Binds 23S rRNA and is also seen to make contacts with the A and possibly P site tRNAs. This chain is Large ribosomal subunit protein uL16, found in Bartonella quintana (strain Toulouse) (Rochalimaea quintana).